Here is a 422-residue protein sequence, read N- to C-terminus: 5-hydroxytryptamine receptor 1A (422 aa).

The segment at 1-23 (MDVLSPGQGNNTTSPPAPFETGG) is disordered. At 1-38 (MDVLSPGQGNNTTSPPAPFETGGNTTGISDVTFSYQVI) the chain is on the extracellular side. Residues N10, N11, and N24 are each glycosylated (N-linked (GlcNAc...) asparagine). The helical transmembrane segment at 39–59 (TSLLLGTLIFCAVLGNACVVA) threads the bilayer. Residues 60-73 (AIALERSLQNVANY) lie on the Cytoplasmic side of the membrane. Residues 74-98 (LIGSLAVTDLMVSVLVLPMAALYQV) form a helical membrane-spanning segment. At 99–107 (LNKWTLGQV) the chain is on the extracellular side. Residues 108-132 (TCDLFIALDVLCCTSSILHLCAIAL) traverse the membrane as a helical segment. C109 and C187 form a disulfide bridge. Residues D116 and C120 each coordinate serotonin. Residues 133 to 135 (DRY) carry the DRY motif; important for ligand-induced conformation changes motif. Residues 133 to 152 (DRYWAITDPIDYVNKRTPRR) lie on the Cytoplasmic side of the membrane. A helical membrane pass occupies residues 153 to 174 (AAALISLTWLIGFLISIPPMLG). Topologically, residues 175–193 (WRTPEDRSDPDACTISKDH) are extracellular. A helical membrane pass occupies residues 194-216 (GYTIYSTFGAFYIPLLLMLVLYG). At 217–346 (RIFRAARFRI…LARERKTVKT (130 aa)) the chain is on the cytoplasmic side. Residues 235–262 (KTGADTRHGASPAPQPKKSVNGESGSRN) form a disordered region. 1D-myo-inositol 4-phosphate contacts are provided by T314, K345, T346, and G352. A helical transmembrane segment spans residues 347–370 (LGIIMGTFILCWLPFFIVALVLPF). The Extracellular portion of the chain corresponds to 371 to 378 (CESSCHMP). The helical transmembrane segment at 379 to 403 (TLLGAIINWLGYSNSLLNPVIYAYF) threads the bilayer. Residues 396–400 (NPVIY) carry the NPxxY motif; important for ligand-induced conformation changes and signaling motif. 1D-myo-inositol 4-phosphate contacts are provided by F403, N404, and K405. At 404-422 (NKDFQNAFKKIIKCKFCRQ) the chain is on the cytoplasmic side.

Belongs to the G-protein coupled receptor 1 family. 5-hydroxytryptamine receptor subfamily. HTR1A sub-subfamily. Heterodimer; heterodimerizes with GPER1. Interacts with YIF1B. Interacts with GPR39 and GALR1.

It localises to the cell membrane. It is found in the cell projection. Its subcellular location is the dendrite. G-protein coupled receptor activity is regulated by lipids: phosphatidylinositol 4-phosphate increases HTR1A-mediated activity. Its function is as follows. G-protein coupled receptor for 5-hydroxytryptamine (serotonin). Also functions as a receptor for various drugs and psychoactive substances. Ligand binding causes a conformation change that triggers signaling via guanine nucleotide-binding proteins (G proteins) and modulates the activity of downstream effectors, such as adenylate cyclase. HTR1A is coupled to G(i)/G(o) G alpha proteins and mediates inhibitory neurotransmission: signaling inhibits adenylate cyclase activity and activates a phosphatidylinositol-calcium second messenger system that regulates the release of Ca(2+) ions from intracellular stores. Beta-arrestin family members regulate signaling by mediating both receptor desensitization and resensitization processes. The chain is 5-hydroxytryptamine receptor 1A (HTR1A) from Gorilla gorilla gorilla (Western lowland gorilla).